A 2128-amino-acid polypeptide reads, in one-letter code: Non-reducing polyketide synthase albA (2128 aa).

Residues 8 to 244 (YLFGDQTSDI…VKAPIHGPYH (237 aa)) form an N-terminal acylcarrier protein transacylase domain (SAT) region. In terms of domain architecture, Ketosynthase family 3 (KS3) spans 375–806 (NSKIAIIGMS…GGNTALLLED (432 aa)). Residues Cys547, His682, and His724 each act as for beta-ketoacyl synthase activity in the active site. The tract at residues 912–1232 (FVFTGQGAQY…LASLHLAGID (321 aa)) is malonyl-CoA:ACP transacylase (MAT) domain. Catalysis depends on Ser1001, which acts as the For acyl/malonyl transferase activity. The segment at 1286 to 1425 (HEYLTTAAQK…CTVRFFDCAA (140 aa)) is N-terminal hotdog fold. The PKS/mFAS DH domain maps to 1286–1598 (HEYLTTAAQK…FQALSRKILD (313 aa)). The interval 1290–1603 (TTAAQKVIET…RKILDTVLPP (314 aa)) is product template (PT) domain. His1326 (proton acceptor; for dehydratase activity) is an active-site residue. Positions 1452–1598 (DAHRLGRGMV…FQALSRKILD (147 aa)) are C-terminal hotdog fold. Residue Asp1511 is the Proton donor; for dehydratase activity of the active site. Residues 1618 to 1695 (PSAPSLVKRA…DFKQFLAPMS (78 aa)) form the Carrier 1 domain. Residue Ser1655 is modified to O-(pantetheine 4'-phosphoryl)serine. Residues 1695-1740 (SQGEASDGSTSDPESSSSFNGGSSTDESSAGSPVSSPPNEKVTQVE) are disordered. Residues 1700-1723 (SDGSTSDPESSSSFNGGSSTDESS) are compositionally biased toward low complexity. The segment covering 1724 to 1740 (AGSPVSSPPNEKVTQVE) has biased composition (polar residues). The region spanning 1739–1816 (VEQHATIKEI…DVEDALGLKP (78 aa)) is the Carrier 2 domain. At Ser1776 the chain carries O-(pantetheine 4'-phosphoryl)serine. Residues 1854–2126 (SPHPRSTSIL…ELGSFIGNAM (273 aa)) are claisen cyclase domain. Catalysis depends on Ser1944, which acts as the For Claisen cyclase activity.

It catalyses the reaction 6 malonyl-CoA + acetyl-CoA + 6 H(+) = naphtopyrone YWA1 + 6 CO2 + 7 CoA + H2O. Its pathway is secondary metabolite biosynthesis. In terms of biological role, non-reducing polyketide synthase; part of the gene cluster that mediates the biosynthesis of aurasperone B, a dimeric gamma-naphthopyrone. The first step in the biosynthesis of aurasperone B is the production of gamma-naphthopyrone precursor YWA1 by the non-reducing polyketide synthase albA, via condensation of one acetyl-CoA starter unit with 6 malonyl-CoA units. YWA1 is then methylated by aunE at position C-6 to yield foncesin which is further methylated at position C-8 by aunD to produce fonsecin B. A key enzyme in the biosynthetic pathway is the cytochrome P450 monooxygenase aunB which catalyzes the oxidative dimerization of fonsecin B to aurasperone B. AunB also catalyzes the oxidative dimerization of rubrofusarin B into aurasperone A. The protein is Non-reducing polyketide synthase albA of Aspergillus niger (strain ATCC 1015 / CBS 113.46 / FGSC A1144 / LSHB Ac4 / NCTC 3858a / NRRL 328 / USDA 3528.7).